The primary structure comprises 1059 residues: Nonsense-mediated mRNA decay factor SMG7 (1059 aa).

2 TPR repeats span residues 149-183 (DQQS…LGDL) and 184-217 (ARYK…WPAS). A compositionally biased stretch (polar residues) spans 806–817 (SHVSPAHSQSTS). 4 disordered regions span residues 806-826 (SHVS…KWSP), 927-955 (HLGP…SGNN), 987-1015 (SGKP…QVPT), and 1040-1059 (STQL…RHFV).

In terms of assembly, interacts with EXA1. In terms of tissue distribution, expressed in flowers and at lower levels in stems and leaves.

It localises to the cytoplasm. Its subcellular location is the P-body. In terms of biological role, plays multiple roles in growth and development. Involved in nonsense-mediated mRNA decay (NMD). May provide a link to the mRNA degradation machinery to initiate NMD and serve as an adapter for UPF proteins function. Required for meiotic progression through anaphase II of pollen mother cells. May counteract cyclin-dependent kinase (CDK) activity at the end of meiosis. May play a role in plant defense through its involvement in NMD. Together with EXA1, helps to restrict cell death induction during pathogen infection in a salicylic acid- (SA) and reactive oxygen species- (ROS) independent manner. The chain is Nonsense-mediated mRNA decay factor SMG7 from Arabidopsis thaliana (Mouse-ear cress).